A 331-amino-acid polypeptide reads, in one-letter code: Holliday junction branch migration complex subunit RuvB (331 aa).

Residues 1 to 182 (MDDRMVDQAL…FGVHLRLEYY (182 aa)) are large ATPase domain (RuvB-L). ATP-binding positions include leucine 21, arginine 22, glycine 63, lysine 66, threonine 67, threonine 68, 129-131 (EDF), arginine 172, tyrosine 182, and arginine 219. Threonine 67 is a Mg(2+) binding site. Residues 183-253 (NENDLKEIII…TTKQALQLLQ (71 aa)) form a small ATPAse domain (RuvB-S) region. Positions 256–331 (AEGLDYIDHK…AYEHFKNFNK (76 aa)) are head domain (RuvB-H). DNA-binding residues include arginine 292, arginine 311, and arginine 316.

The protein belongs to the RuvB family. As to quaternary structure, homohexamer. Forms an RuvA(8)-RuvB(12)-Holliday junction (HJ) complex. HJ DNA is sandwiched between 2 RuvA tetramers; dsDNA enters through RuvA and exits via RuvB. An RuvB hexamer assembles on each DNA strand where it exits the tetramer. Each RuvB hexamer is contacted by two RuvA subunits (via domain III) on 2 adjacent RuvB subunits; this complex drives branch migration. In the full resolvosome a probable DNA-RuvA(4)-RuvB(12)-RuvC(2) complex forms which resolves the HJ.

It is found in the cytoplasm. The catalysed reaction is ATP + H2O = ADP + phosphate + H(+). Functionally, the RuvA-RuvB-RuvC complex processes Holliday junction (HJ) DNA during genetic recombination and DNA repair, while the RuvA-RuvB complex plays an important role in the rescue of blocked DNA replication forks via replication fork reversal (RFR). RuvA specifically binds to HJ cruciform DNA, conferring on it an open structure. The RuvB hexamer acts as an ATP-dependent pump, pulling dsDNA into and through the RuvAB complex. RuvB forms 2 homohexamers on either side of HJ DNA bound by 1 or 2 RuvA tetramers; 4 subunits per hexamer contact DNA at a time. Coordinated motions by a converter formed by DNA-disengaged RuvB subunits stimulates ATP hydrolysis and nucleotide exchange. Immobilization of the converter enables RuvB to convert the ATP-contained energy into a lever motion, pulling 2 nucleotides of DNA out of the RuvA tetramer per ATP hydrolyzed, thus driving DNA branch migration. The RuvB motors rotate together with the DNA substrate, which together with the progressing nucleotide cycle form the mechanistic basis for DNA recombination by continuous HJ branch migration. Branch migration allows RuvC to scan DNA until it finds its consensus sequence, where it cleaves and resolves cruciform DNA. This chain is Holliday junction branch migration complex subunit RuvB, found in Staphylococcus haemolyticus (strain JCSC1435).